Reading from the N-terminus, the 1187-residue chain is Protein WWC2 (1187 aa).

WW domains follow at residues 10–43 and 57–90; these read LPLP…DPRD and DELP…DPRK. Coiled coils occupy residues 121–194 and 224–256; these read KEQR…YKQQ and ELKS…FHLD. Ser286 carries the phosphoserine modification. Residues 302 to 423 are a coiled coil; the sequence is LAEKVRLSLQ…EETTKLTTSL (122 aa). The tract at residues 438 to 464 is disordered; that stretch reads SSGSSLGSLASSRGSLNTSSRGSLNSL. One can recognise a C2 domain in the interval 697–820; that stretch reads ETAQVQIGLR…FSNEIFMLWY (124 aa). Disordered stretches follow at residues 830–849 and 874–963; these read CKKN…QPML and ELAQ…ETNT. A coiled-coil region spans residues 859-885; sequence ALLARTSAELLAVEQELAQEEEEEELR. A compositionally biased stretch (acidic residues) spans 875-884; the sequence is LAQEEEEEEL. Thr999 is modified (phosphothreonine). Ser1017 is subject to Phosphoserine. An interaction with PRKCZ region spans residues 1026–1045; sequence SLFVRNSTERRSLRVKRAVC. The stretch at 1063 to 1143 forms a coiled coil; that stretch reads DLELDLQASL…DLNAERLMRQ (81 aa).

This sequence belongs to the WWC family. Forms homodimers and heterodimers with WWC1 and WWC3. Interacts with DLC1 and PRKCZ. Interacts (via WW domains) with LATS1 and LATS2.

It is found in the cytoplasm. The protein localises to the cytosol. Functionally, regulator of the Hippo signaling pathway, also known as the Salvador-Warts-Hippo (SWH) pathway. Enhances phosphorylation of LATS1 and YAP1 and negatively regulates cell proliferation and organ growth due to a suppression of the transcriptional activity of YAP1, the major effector of the Hippo pathway. This Mus musculus (Mouse) protein is Protein WWC2 (Wwc2).